Consider the following 407-residue polypeptide: Proteasome-activating nucleotidase (407 aa).

The stretch at 22 to 67 forms a coiled coil; sequence KEKTQIAELESKVLRLELKNKDVTRENVQIKKENEILKRELDKLRI. Residues 192 to 197 and H331 contribute to the ATP site; that span reads GTGKTL. Residues 405-407 form a docks into pockets in the proteasome alpha-ring to cause gate opening region; the sequence is MYG.

Belongs to the AAA ATPase family. Homohexamer. The hexameric complex has a two-ring architecture resembling a top hat that caps the 20S proteasome core at one or both ends. Upon ATP-binding, the C-terminus of PAN interacts with the alpha-rings of the proteasome core by binding to the intersubunit pockets.

Its subcellular location is the cytoplasm. In terms of biological role, ATPase which is responsible for recognizing, binding, unfolding and translocation of substrate proteins into the archaeal 20S proteasome core particle. Is essential for opening the gate of the 20S proteasome via an interaction with its C-terminus, thereby allowing substrate entry and access to the site of proteolysis. Thus, the C-termini of the proteasomal ATPase function like a 'key in a lock' to induce gate opening and therefore regulate proteolysis. Unfolding activity requires energy from ATP hydrolysis, whereas ATP binding alone promotes ATPase-20S proteasome association which triggers gate opening, and supports translocation of unfolded substrates. In Methanococcus maripaludis (strain C7 / ATCC BAA-1331), this protein is Proteasome-activating nucleotidase.